The following is a 541-amino-acid chain: 1'-carboxy-chondrochloren decarboxylase (541 aa).

Positions 39–226 constitute an FAD-binding PCMH-type domain; that stretch reads TTHRIPAIIS…TRMTIWLAPR (188 aa).

The enzyme catalyses 1'-carboxy-chondrochloren A + FAD + 2 H(+) = chondrochloren A + FADH2 + CO2. It catalyses the reaction 1'-carboxy-chondrochloren B + FAD + 2 H(+) = chondrochloren B + FADH2 + CO2. It participates in antibiotic biosynthesis. With respect to regulation, activity is not affected by the addition of EDTA or/and EGTA chelators or in the presence of external metals like Zn(2+), Mg(2+), Mn(2+) and Fe(2+). Activity is inhibited under low oxygen conditions. Oxidative decarboxylase involved in the biosynthesis of the antibiotics chondrochloren A and chondrochloren B. Catalyzes the decarboxylation of biologically inactive pre-chondrochloren A and pre-chondrochloren B to yield mature chondrochloren A and chondrochloren B, respectively. Cannot decarboxylate free L-tyrosine, 3-chloro-tyrosine or a number of chlorinated and non-chlorinated analog substrates containing variable N-acyl chains. This chain is 1'-carboxy-chondrochloren decarboxylase, found in Chondromyces crocatus.